We begin with the raw amino-acid sequence, 72 residues long: Large ribosomal subunit protein bL31 (72 aa).

The protein belongs to the bacterial ribosomal protein bL31 family. Type A subfamily. As to quaternary structure, part of the 50S ribosomal subunit.

In terms of biological role, binds the 23S rRNA. The sequence is that of Large ribosomal subunit protein bL31 from Deinococcus geothermalis (strain DSM 11300 / CIP 105573 / AG-3a).